We begin with the raw amino-acid sequence, 413 residues long: Histidine decarboxylase (413 aa).

H129 provides a ligand contact to substrate. The residue at position 242 (K242) is an N6-(pyridoxal phosphate)lysine.

This sequence belongs to the group II decarboxylase family. Requires pyridoxal 5'-phosphate as cofactor. In terms of tissue distribution, ripe fruits; not detected in leaves and unripe fruit.

It catalyses the reaction L-histidine + H(+) = histamine + CO2. The chain is Histidine decarboxylase (HDC) from Solanum lycopersicum (Tomato).